A 157-amino-acid polypeptide reads, in one-letter code: MKFSIAAAVVAFAASVAALPPAHDSQFAGNGVGNKGNSNVKFPVPENVTVKQASDKCGDQAQLSCCNKATYAGDTTTVDEGLLSGALSGLIGAGSGAEGLGLFDQCSKLDVAVLIGIQDLVNQKCKQNIACCQNSPSSADGNLIGVGLPCVALGSIL.

The N-terminal stretch at 1 to 41 (MKFSIAAAVVAFAASVAALPPAHDSQFAGNGVGNKGNSNVK) is a signal peptide. N-linked (GlcNAc...) asparagine glycosylation is present at Asn47. Cystine bridges form between Cys57-Cys131, Cys65-Cys125, Cys66-Cys106, and Cys132-Cys150.

This sequence belongs to the fungal hydrophobin family. As to quaternary structure, self-assembles to form functional amyloid fibrils called rodlets. Self-assembly into fibrillar rodlets occurs spontaneously at hydrophobic:hydrophilic interfaces and the rodlets further associate laterally to form amphipathic monolayers.

It is found in the secreted. It localises to the spore wall. Its function is as follows. Aerial growth, conidiation, and dispersal of filamentous fungi in the environment rely upon a capability of their secreting small amphipathic proteins called hydrophobins (HPBs) with low sequence identity. Class I can self-assemble into an outermost layer of rodlet bundles on aerial cell surfaces, conferring cellular hydrophobicity that supports fungal growth, development and dispersal; whereas Class II form highly ordered films at water-air interfaces through intermolecular interactions but contribute nothing to the rodlet structure. RodA is a class I hydrophobin that contributes to surface hydrophobicity, which is important for processes such as association of hyphae in reproductive structures, dispersal of aerial spores and adhesion of pathogens to host structures. Important for the formation of hydrophobic rodlet layers of asexually-produced spores. Promotes also biofilm formation and may enhance lignocellulose utilization via promoting a compact substrate-enzyme-fungus structure. The polypeptide is Class I hydrophobin rodA (Emericella nidulans (strain FGSC A4 / ATCC 38163 / CBS 112.46 / NRRL 194 / M139) (Aspergillus nidulans)).